The sequence spans 540 residues: Mitochondrial distribution and morphology protein 34 (540 aa).

Residues 1–208 (MSFKFNSGTF…LPSVIFNMSQ (208 aa)) enclose the SMP-LTD domain. Disordered stretches follow at residues 26-51 (ALNP…KKPK) and 379-399 (RSKS…SGSL). A compositionally biased stretch (polar residues) spans 35–44 (PESTSGQDGS).

This sequence belongs to the MDM34 family. As to quaternary structure, component of the ER-mitochondria encounter structure (ERMES) or MDM complex, composed of MMM1, MDM10, MDM12 and MDM34.

It localises to the mitochondrion outer membrane. Its function is as follows. Component of the ERMES/MDM complex, which serves as a molecular tether to connect the endoplasmic reticulum (ER) and mitochondria. Components of this complex are involved in the control of mitochondrial shape and protein biogenesis, and function in nonvesicular lipid trafficking between the ER and mitochondria. MDM34 is required for the interaction of the ER-resident membrane protein MMM1 and the outer mitochondrial membrane-resident beta-barrel protein MDM10. This is Mitochondrial distribution and morphology protein 34 from Kluyveromyces lactis (strain ATCC 8585 / CBS 2359 / DSM 70799 / NBRC 1267 / NRRL Y-1140 / WM37) (Yeast).